Reading from the N-terminus, the 420-residue chain is ATP-dependent Clp protease ATP-binding subunit ClpX (420 aa).

Residues 4–57 (KTPGNNGKQKLFCSFCGKEQDAVKRLVAGPGVYICDECISLCNEIIAEDHEHSH) form the ClpX-type ZB domain. Residues Cys16, Cys19, Cys38, and Cys41 each coordinate Zn(2+). 122–129 (PTGSGKTL) contacts ATP.

This sequence belongs to the ClpX chaperone family. Component of the ClpX-ClpP complex. Forms a hexameric ring that, in the presence of ATP, binds to fourteen ClpP subunits assembled into a disk-like structure with a central cavity, resembling the structure of eukaryotic proteasomes.

In terms of biological role, ATP-dependent specificity component of the Clp protease. It directs the protease to specific substrates. Can perform chaperone functions in the absence of ClpP. In Leptospira interrogans serogroup Icterohaemorrhagiae serovar copenhageni (strain Fiocruz L1-130), this protein is ATP-dependent Clp protease ATP-binding subunit ClpX.